Consider the following 145-residue polypeptide: Large ribosomal subunit protein uL16 (145 aa).

Over residues 76 to 95 (PKTKTPAETRMGKGKGEPEH) the composition is skewed to basic and acidic residues. A disordered region spans residues 76–97 (PKTKTPAETRMGKGKGEPEHFV).

The protein belongs to the universal ribosomal protein uL16 family. In terms of assembly, part of the 50S ribosomal subunit.

In terms of biological role, binds 23S rRNA and is also seen to make contacts with the A and possibly P site tRNAs. The protein is Large ribosomal subunit protein uL16 of Salinibacter ruber (strain DSM 13855 / M31).